We begin with the raw amino-acid sequence, 307 residues long: Mycothiol acetyltransferase (307 aa).

N-acetyltransferase domains are found at residues His15–Pro158 and Val164–Ser307. Glu46 contacts 1D-myo-inositol 2-(L-cysteinylamino)-2-deoxy-alpha-D-glucopyranoside. Residue Leu90–Val92 participates in acetyl-CoA binding. Residues Glu191, Lys230, and Glu239 each contribute to the 1D-myo-inositol 2-(L-cysteinylamino)-2-deoxy-alpha-D-glucopyranoside site. Acetyl-CoA is bound by residues Val243 to Val245 and Gln250 to Lys256. Position 277 (Tyr277) interacts with 1D-myo-inositol 2-(L-cysteinylamino)-2-deoxy-alpha-D-glucopyranoside.

It belongs to the acetyltransferase family. MshD subfamily. Monomer.

The enzyme catalyses 1D-myo-inositol 2-(L-cysteinylamino)-2-deoxy-alpha-D-glucopyranoside + acetyl-CoA = mycothiol + CoA + H(+). Functionally, catalyzes the transfer of acetyl from acetyl-CoA to desacetylmycothiol (Cys-GlcN-Ins) to form mycothiol. This chain is Mycothiol acetyltransferase, found in Streptomyces griseus subsp. griseus (strain JCM 4626 / CBS 651.72 / NBRC 13350 / KCC S-0626 / ISP 5235).